The primary structure comprises 466 residues: Soluble pyridine nucleotide transhydrogenase (466 aa).

36–45 serves as a coordination point for FAD; the sequence is ERYQNVGGGC.

The protein belongs to the class-I pyridine nucleotide-disulfide oxidoreductase family. In terms of assembly, homooligomer; probable homooctamer. It depends on FAD as a cofactor.

It is found in the cytoplasm. The catalysed reaction is NAD(+) + NADPH = NADH + NADP(+). In terms of biological role, conversion of NADPH, generated by peripheral catabolic pathways, to NADH, which can enter the respiratory chain for energy generation. This is Soluble pyridine nucleotide transhydrogenase from Escherichia coli O157:H7.